A 364-amino-acid polypeptide reads, in one-letter code: Alanine racemase (364 aa).

Lys-35 functions as the Proton acceptor; specific for D-alanine in the catalytic mechanism. At Lys-35 the chain carries N6-(pyridoxal phosphate)lysine. Arg-136 lines the substrate pocket. The active-site Proton acceptor; specific for L-alanine is the Tyr-261. Met-309 contributes to the substrate binding site.

It belongs to the alanine racemase family. Pyridoxal 5'-phosphate serves as cofactor.

The catalysed reaction is L-alanine = D-alanine. The protein operates within amino-acid biosynthesis; D-alanine biosynthesis; D-alanine from L-alanine: step 1/1. Its function is as follows. Catalyzes the interconversion of L-alanine and D-alanine. May also act on other amino acids. This chain is Alanine racemase (alr), found in Shewanella amazonensis (strain ATCC BAA-1098 / SB2B).